The chain runs to 482 residues: Ribosomal RNA small subunit methyltransferase F (482 aa).

S-adenosyl-L-methionine contacts are provided by residues 119-125, E143, D170, and D188; that span reads ASAPGSK. Catalysis depends on C241, which acts as the Nucleophile.

It belongs to the class I-like SAM-binding methyltransferase superfamily. RsmB/NOP family.

The protein resides in the cytoplasm. The catalysed reaction is cytidine(1407) in 16S rRNA + S-adenosyl-L-methionine = 5-methylcytidine(1407) in 16S rRNA + S-adenosyl-L-homocysteine + H(+). In terms of biological role, specifically methylates the cytosine at position 1407 (m5C1407) of 16S rRNA. The chain is Ribosomal RNA small subunit methyltransferase F from Shewanella sp. (strain MR-7).